The chain runs to 459 residues: tRNA modification GTPase MnmE (459 aa).

Arg-23, Glu-86, and Arg-125 together coordinate (6S)-5-formyl-5,6,7,8-tetrahydrofolate. The 160-residue stretch at 221–380 (GLKTVIVGKP…LQDKIESMVY (160 aa)) folds into the TrmE-type G domain. Asn-231 contacts K(+). GTP-binding positions include 231-236 (NVGKSS), 250-256 (TDIPGTT), and 275-278 (DTAG). Ser-235 serves as a coordination point for Mg(2+). Positions 250, 252, and 255 each coordinate K(+). Position 256 (Thr-256) interacts with Mg(2+). Lys-459 is a (6S)-5-formyl-5,6,7,8-tetrahydrofolate binding site.

This sequence belongs to the TRAFAC class TrmE-Era-EngA-EngB-Septin-like GTPase superfamily. TrmE GTPase family. In terms of assembly, homodimer. Heterotetramer of two MnmE and two MnmG subunits. K(+) is required as a cofactor.

It is found in the cytoplasm. Its function is as follows. Exhibits a very high intrinsic GTPase hydrolysis rate. Involved in the addition of a carboxymethylaminomethyl (cmnm) group at the wobble position (U34) of certain tRNAs, forming tRNA-cmnm(5)s(2)U34. This is tRNA modification GTPase MnmE from Clostridioides difficile (strain 630) (Peptoclostridium difficile).